A 283-amino-acid chain; its full sequence is Diaminopimelate epimerase (283 aa).

Substrate contacts are provided by Asn14, Gln47, and Asn67. The active-site Proton donor is the Cys76. Residues 77-78, Asn164, Asn197, and 215-216 contribute to the substrate site; these read GN and ER. Cys224 functions as the Proton acceptor in the catalytic mechanism. 225–226 provides a ligand contact to substrate; that stretch reads GT.

This sequence belongs to the diaminopimelate epimerase family. As to quaternary structure, homodimer.

Its subcellular location is the cytoplasm. The catalysed reaction is (2S,6S)-2,6-diaminopimelate = meso-2,6-diaminopimelate. The protein operates within amino-acid biosynthesis; L-lysine biosynthesis via DAP pathway; DL-2,6-diaminopimelate from LL-2,6-diaminopimelate: step 1/1. In terms of biological role, catalyzes the stereoinversion of LL-2,6-diaminopimelate (L,L-DAP) to meso-diaminopimelate (meso-DAP), a precursor of L-lysine and an essential component of the bacterial peptidoglycan. In Neisseria meningitidis serogroup A / serotype 4A (strain DSM 15465 / Z2491), this protein is Diaminopimelate epimerase.